Here is a 541-residue protein sequence, read N- to C-terminus: GTPase Obg (541 aa).

The 158-residue stretch at Pro2–Val159 folds into the Obg domain. Residues His63 to Gly84 are disordered. Positions Ala160–Ala332 constitute an OBG-type G domain. GTP is bound by residues Gly166–Ser173, Phe191–Val195, Asp213–Gly216, Asn284–Asp287, and Ser313–Ala315. Mg(2+) is bound by residues Ser173 and Thr193. An OCT domain is found at Pro350–Pro427. Residues Lys497–Gly541 form a disordered region. Residues Gly517–Gly527 show a composition bias toward low complexity. Gly residues predominate over residues Asp528–Gly541.

The protein belongs to the TRAFAC class OBG-HflX-like GTPase superfamily. OBG GTPase family. Monomer. Mg(2+) is required as a cofactor.

The protein resides in the cytoplasm. In terms of biological role, an essential GTPase which binds GTP, GDP and possibly (p)ppGpp with moderate affinity, with high nucleotide exchange rates and a fairly low GTP hydrolysis rate. Plays a role in control of the cell cycle, stress response, ribosome biogenesis and in those bacteria that undergo differentiation, in morphogenesis control. The chain is GTPase Obg from Parafrankia sp. (strain EAN1pec).